A 104-amino-acid chain; its full sequence is uncharacterized protein (104 aa).

This is an uncharacterized protein from Invertebrate iridescent virus 3 (IIV-3).